The primary structure comprises 284 residues: Shikimate dehydrogenase (NADP(+)) (284 aa).

Shikimate-binding positions include 20 to 22 and S67; that span reads SIS. Catalysis depends on K71, which acts as the Proton acceptor. D83 serves as a coordination point for NADP(+). Shikimate is bound by residues N92 and D107. Residues 129 to 133 and I227 each bind NADP(+); that span reads GAGGA. Position 229 (Y229) interacts with shikimate. G250 serves as a coordination point for NADP(+).

This sequence belongs to the shikimate dehydrogenase family. As to quaternary structure, homodimer.

It catalyses the reaction shikimate + NADP(+) = 3-dehydroshikimate + NADPH + H(+). It functions in the pathway metabolic intermediate biosynthesis; chorismate biosynthesis; chorismate from D-erythrose 4-phosphate and phosphoenolpyruvate: step 4/7. In terms of biological role, involved in the biosynthesis of the chorismate, which leads to the biosynthesis of aromatic amino acids. Catalyzes the reversible NADPH linked reduction of 3-dehydroshikimate (DHSA) to yield shikimate (SA). The chain is Shikimate dehydrogenase (NADP(+)) from Streptococcus pneumoniae (strain CGSP14).